Consider the following 176-residue polypeptide: MEITVVKGDITEQDVDVIVNAANPGLLGGGGVDGAIHQAAGPDLLKECQEVINRIGTCPAGEAVITSAGDLQASYIIHAVGPIWKDGEHQEANKLASCYWKALDLAAGKELTSIAFPNISTGVYGFPKKLAAEVALYTVRKWAEEEYDTSIEEIRFVCFDEENLKLYNKLINSEVV.

Residues methionine 1–valine 175 enclose the Macro domain.

It belongs to the MacroD-type family.

This Listeria monocytogenes serotype 4b (strain F2365) protein is Macro domain-containing protein LMOf2365_2748.